The sequence spans 487 residues: Glutamyl-tRNA(Gln) amidotransferase subunit A (487 aa).

Active-site charge relay system residues include lysine 80 and serine 155. The active-site Acyl-ester intermediate is serine 179.

This sequence belongs to the amidase family. GatA subfamily. Heterotrimer of A, B and C subunits.

It carries out the reaction L-glutamyl-tRNA(Gln) + L-glutamine + ATP + H2O = L-glutaminyl-tRNA(Gln) + L-glutamate + ADP + phosphate + H(+). Functionally, allows the formation of correctly charged Gln-tRNA(Gln) through the transamidation of misacylated Glu-tRNA(Gln) in organisms which lack glutaminyl-tRNA synthetase. The reaction takes place in the presence of glutamine and ATP through an activated gamma-phospho-Glu-tRNA(Gln). The sequence is that of Glutamyl-tRNA(Gln) amidotransferase subunit A from Chloroflexus aurantiacus (strain ATCC 29366 / DSM 635 / J-10-fl).